The primary structure comprises 635 residues: Early transcription factor 70 kDa subunit (635 aa).

The 154-residue stretch at 32-185 (RSILDENNSV…SNIISIMSDE (154 aa)) folds into the Helicase ATP-binding domain. 45 to 52 (HIMGSGKT) provides a ligand contact to ATP. The short motif at 135-138 (DEAH) is the DEXH box element.

Belongs to the helicase family. VETF subfamily. In terms of assembly, heterodimer of a 70 kDa and a 82 kDa subunit. Part of the early transcription complex composed of ETF, RAP94, and the DNA-directed RNA polymerase.

The protein resides in the virion. In terms of biological role, acts with RNA polymerase to initiate transcription from early gene promoters. Is recruited by the RPO-associated protein of 94 kDa (RAP94) to form the early transcription complex, which also contains the core RNA polymerase. ETF heterodimer binds to early gene promoters. The chain is Early transcription factor 70 kDa subunit (VETFS) from Homo sapiens (Human).